The primary structure comprises 718 residues: Ribosome-releasing factor 2, mitochondrial (718 aa).

The N-terminal 29 residues, 1-29 (MLKCAWQNGPRQSNRWLWQLSNQIWKRSY), are a transit peptide targeting the mitochondrion. The 280-residue stretch at 31–310 (SKIRNIGILA…AVNSYLPAPE (280 aa)) folds into the tr-type G domain. Residues 40–47 (AHIDAGKT), 104–108 (DTPGH), and 158–161 (NKMD) each bind GTP.

Belongs to the TRAFAC class translation factor GTPase superfamily. Classic translation factor GTPase family. EF-G/EF-2 subfamily.

It is found in the mitochondrion. Its function is as follows. Mitochondrial GTPase that mediates the disassembly of ribosomes from messenger RNA at the termination of mitochondrial protein biosynthesis. Not involved in the GTP-dependent ribosomal translocation step during translation elongation. This is Ribosome-releasing factor 2, mitochondrial from Drosophila erecta (Fruit fly).